We begin with the raw amino-acid sequence, 394 residues long: Bone morphogenetic protein 15 (394 aa).

The N-terminal stretch at 1 to 18 (MVLLSILRILLLWGLVLF) is a signal peptide. A propeptide spanning residues 19-269 (MEHRVQMTQV…DPSLLLRRAR (251 aa)) is cleaved from the precursor. N-linked (GlcNAc...) asparagine glycans are attached at residues Asn87 and Asn238. Cystine bridges form between Cys293-Cys359, Cys322-Cys391, and Cys326-Cys393. A glycan (N-linked (GlcNAc...) asparagine) is linked at Asn375.

This sequence belongs to the TGF-beta family. Homodimer or heterodimer (Potential). But, in contrast to other members of this family, cannot be disulfide-linked.

The protein resides in the secreted. May be involved in follicular development. Seems to be an oocyte-specific growth/differentiation factor that stimulates folliculogenesis and granulosa cell (GC) growth. The chain is Bone morphogenetic protein 15 (BMP15) from Bos taurus (Bovine).